Reading from the N-terminus, the 324-residue chain is Quinolinate synthase (324 aa).

Residues His-44 and Ser-62 each contribute to the iminosuccinate site. Cys-107 is a binding site for [4Fe-4S] cluster. Iminosuccinate is bound by residues 133 to 135 (YVN) and Ser-150. Cys-192 contributes to the [4Fe-4S] cluster binding site. Residues 218-220 (HPE) and Thr-235 contribute to the iminosuccinate site. Cys-278 is a binding site for [4Fe-4S] cluster.

The protein belongs to the quinolinate synthase family. Type 2 subfamily. It depends on [4Fe-4S] cluster as a cofactor.

It is found in the cytoplasm. The catalysed reaction is iminosuccinate + dihydroxyacetone phosphate = quinolinate + phosphate + 2 H2O + H(+). It functions in the pathway cofactor biosynthesis; NAD(+) biosynthesis; quinolinate from iminoaspartate: step 1/1. Its function is as follows. Catalyzes the condensation of iminoaspartate with dihydroxyacetone phosphate to form quinolinate. In Leptospira interrogans serogroup Icterohaemorrhagiae serovar copenhageni (strain Fiocruz L1-130), this protein is Quinolinate synthase.